Reading from the N-terminus, the 669-residue chain is DNA ligase (669 aa).

NAD(+) is bound by residues 34 to 38 (DAEYD), 83 to 84 (SL), and Glu114. Lys116 serves as the catalytic N6-AMP-lysine intermediate. NAD(+) is bound by residues Arg137, Glu171, Lys287, and Lys311. The Zn(2+) site is built by Cys405, Cys408, Cys423, and Cys428. Residues 591–669 (NVESYFAGKT…EERFLQELNK (79 aa)) enclose the BRCT domain.

Belongs to the NAD-dependent DNA ligase family. LigA subfamily. The cofactor is Mg(2+). Mn(2+) serves as cofactor.

It catalyses the reaction NAD(+) + (deoxyribonucleotide)n-3'-hydroxyl + 5'-phospho-(deoxyribonucleotide)m = (deoxyribonucleotide)n+m + AMP + beta-nicotinamide D-nucleotide.. Functionally, DNA ligase that catalyzes the formation of phosphodiester linkages between 5'-phosphoryl and 3'-hydroxyl groups in double-stranded DNA using NAD as a coenzyme and as the energy source for the reaction. It is essential for DNA replication and repair of damaged DNA. This chain is DNA ligase, found in Bacillus cereus (strain G9842).